The following is a 2413-amino-acid chain: Pre-mRNA-splicing factor 8 (2413 aa).

2 stretches are compositionally biased toward pro residues: residues 1-10 (MSGLPPPPPG) and 19-28 (LPPPPPPPPG). The segment at 1–60 (MSGLPPPPPGFEEDSDLALPPPPPPPPGYEIEELDNPMVPSSVNEDTFLPPPPPPPSNFE) is disordered. Residues 253–543 (QHIENIEPLD…LHPTLPTNHN (291 aa)) are SNU114/CWC21 interacting domain (SCwid). The tract at residues 885–1375 (VMVEWLESRS…RIQNRVKLGL (491 aa)) is reverse transcriptase homology domain. A linker region spans residues 1376–1649 (NSKMPTRFPP…TLKISLIQIF (274 aa)). The interval 1585–1598 (MQFKKLTHAQRTGL) is important for branch point selection. The interval 1653–1824 (LWQKIHESIV…LRERIRKGLQ (172 aa)) is restriction endonuclease homology domain. The interval 1839–2092 (NYAELFNNDI…ILGQNIKAPS (254 aa)) is RNase H homology domain. One can recognise an MPN domain in the interval 2182–2311 (VYVLPKNLLK…LSAYNLTDEG (130 aa)).

Component of the U4/U6-U5 tri-snRNP complex composed of the U4, U6 and U5 snRNAs and at least PRP3, PRP4, PRP6, PRP8, PRP18, PRP31, PRP38, SNU13, SNU23, SNU66, SNU114, SPP381, SMB1, SMD1, SMD2, SMD3, SMX2, SMX3, LSM2, LSM3, LSM4, LSM5, LSM6, LSM7, LSM8, BRR2 and DIB1. Belongs to the CWC complex (or CEF1-associated complex), a spliceosome sub-complex reminiscent of a late-stage spliceosome composed of the U2, U5 and U6 snRNAs and at least BUD13, BUD31, BRR2, CDC40, CEF1, CLF1, CUS1, CWC2, CWC15, CWC21, CWC22, CWC23, CWC24, CWC25, CWC27, ECM2, HSH155, IST3, ISY1, LEA1, MSL1, NTC20, PRP8, PRP9, PRP11, PRP19, PRP21, PRP22, PRP45, PRP46, SLU7, SMB1, SMD1, SMD2, SMD3, SMX2, SMX3, SNT309, SNU114, SPP2, SYF1, SYF2, RSE1 and YJU2. Interacts with PRP40 and SNP1. Interacts (via SCwid domain) with CWC21. Interacts (via SCwid domain) with SNU114 (via N-terminus). Interacts (via RNase H homology domain and MPN domain) with BRR2; this modulates BRR2 ATPase and helicase activity. Interacts (via RNase H homology domain) with AAR2. AAR2 and BRR2 compete for PRP8 binding, and during U5 snRNP maturation BRR2 displaces the initially bound AAR2. Is associated with snRNP U5, together with SNU114 and BRR2.

It is found in the nucleus. Functions as a scaffold that mediates the ordered assembly of spliceosomal proteins and snRNAs. Required for association of BRR2 with the spliceosomal U5 snRNP, and the subsequent assembly of the U4/U6-U5 tri-snRNP complex. Functions as a scaffold that positions spliceosomal U2, U5 and U6 snRNAs at splice sites on pre-mRNA substrates, so that splicing can occur. Interacts with both the 5' and the 3' splice site, as well as the branch region. Has a role in branch site-3' splice site selection. Associates with the branch site-3' splice 3'-exon region. Also has a role in cell cycle. In Saccharomyces cerevisiae (strain ATCC 204508 / S288c) (Baker's yeast), this protein is Pre-mRNA-splicing factor 8 (PRP8).